We begin with the raw amino-acid sequence, 637 residues long: Sodium-dependent proline transporter (637 aa).

Over Met1 to Asp45 the chain is Cytoplasmic. Position 20 is a phosphothreonine (Thr20). Phosphoserine is present on Ser22. A run of 3 helical transmembrane segments spans residues Phe46–Arg66, Ala74–Leu93, and Gly117–Ile137. Over Ala138–Arg214 the chain is Extracellular. Asn182 carries N-linked (GlcNAc...) asparagine glycosylation. 9 consecutive transmembrane segments (helical) span residues Trp215–Leu233, Val242–Val259, Ile295–Tyr312, Phe324–Leu345, Leu378–Leu397, Val425–Thr443, Ser459–Ile479, Ala500–Val519, and Leu538–Val556. Topologically, residues Ala557 to Met637 are cytoplasmic. Ser573 and Ser582 each carry phosphoserine. Phosphothreonine is present on Thr588. Tyr591 is subject to Phosphotyrosine. A phosphoserine mark is found at Ser598 and Ser600.

Belongs to the sodium:neurotransmitter symporter (SNF) (TC 2.A.22) family. SLC6A7 subfamily. In terms of tissue distribution, expressed in subpopulations of putative glutamatergic pathways of rat brain.

Its subcellular location is the synaptic cell membrane. It catalyses the reaction L-proline(out) + chloride(out) + 2 Na(+)(out) = L-proline(in) + chloride(in) + 2 Na(+)(in). It carries out the reaction L-pipecolate(out) + chloride(out) + 2 Na(+)(out) = L-pipecolate(in) + chloride(in) + 2 Na(+)(in). Its function is as follows. Brain specific sodium (and chloride)-dependent proline transporter. Terminates the action of proline by its high affinity sodium-dependent reuptake into presynaptic terminals. This chain is Sodium-dependent proline transporter (Slc6a7), found in Rattus norvegicus (Rat).